The sequence spans 205 residues: Small ribosomal subunit protein uS4 (205 aa).

In terms of domain architecture, S4 RNA-binding spans 94 to 157; the sequence is SRLDTVVYRM…QQIPLIQESI (64 aa).

Belongs to the universal ribosomal protein uS4 family. Part of the 30S ribosomal subunit. Contacts protein S5. The interaction surface between S4 and S5 is involved in control of translational fidelity.

Functionally, one of the primary rRNA binding proteins, it binds directly to 16S rRNA where it nucleates assembly of the body of the 30S subunit. Its function is as follows. With S5 and S12 plays an important role in translational accuracy. This is Small ribosomal subunit protein uS4 from Rickettsia typhi (strain ATCC VR-144 / Wilmington).